The sequence spans 275 residues: NAD kinase (275 aa).

The active-site Proton acceptor is the D53. Residues 53–54 (DG), 129–130 (NE), R155, D157, and 168–173 (TAYNKS) each bind NAD(+).

This sequence belongs to the NAD kinase family. A divalent metal cation is required as a cofactor.

It localises to the cytoplasm. It carries out the reaction NAD(+) + ATP = ADP + NADP(+) + H(+). In terms of biological role, involved in the regulation of the intracellular balance of NAD and NADP, and is a key enzyme in the biosynthesis of NADP. Catalyzes specifically the phosphorylation on 2'-hydroxyl of the adenosine moiety of NAD to yield NADP. This Streptococcus agalactiae serotype Ia (strain ATCC 27591 / A909 / CDC SS700) protein is NAD kinase.